A 523-amino-acid polypeptide reads, in one-letter code: Protein nucleotidyltransferase YdiU (523 aa).

Residues G101, G103, R104, K128, D140, G141, R198, and R205 each contribute to the ATP site. Residue D275 is the Proton acceptor of the active site. The Mg(2+) site is built by N276 and D285. Residue D285 participates in ATP binding.

The protein belongs to the SELO family. Mg(2+) is required as a cofactor. It depends on Mn(2+) as a cofactor.

It carries out the reaction L-seryl-[protein] + ATP = 3-O-(5'-adenylyl)-L-seryl-[protein] + diphosphate. The catalysed reaction is L-threonyl-[protein] + ATP = 3-O-(5'-adenylyl)-L-threonyl-[protein] + diphosphate. The enzyme catalyses L-tyrosyl-[protein] + ATP = O-(5'-adenylyl)-L-tyrosyl-[protein] + diphosphate. It catalyses the reaction L-histidyl-[protein] + UTP = N(tele)-(5'-uridylyl)-L-histidyl-[protein] + diphosphate. It carries out the reaction L-seryl-[protein] + UTP = O-(5'-uridylyl)-L-seryl-[protein] + diphosphate. The catalysed reaction is L-tyrosyl-[protein] + UTP = O-(5'-uridylyl)-L-tyrosyl-[protein] + diphosphate. In terms of biological role, nucleotidyltransferase involved in the post-translational modification of proteins. It can catalyze the addition of adenosine monophosphate (AMP) or uridine monophosphate (UMP) to a protein, resulting in modifications known as AMPylation and UMPylation. The protein is Protein nucleotidyltransferase YdiU of Aromatoleum aromaticum (strain DSM 19018 / LMG 30748 / EbN1) (Azoarcus sp. (strain EbN1)).